Reading from the N-terminus, the 358-residue chain is tRNA-specific 2-thiouridylase MnmA (358 aa).

ATP contacts are provided by residues 8–15 (GMSGGVDS) and M34. C103 serves as the catalytic Nucleophile. Residues C103 and C199 are joined by a disulfide bond. G127 is a binding site for ATP. The tract at residues 149 to 151 (KDQ) is interaction with tRNA. Catalysis depends on C199, which acts as the Cysteine persulfide intermediate. The segment at 305-306 (RY) is interaction with tRNA.

This sequence belongs to the MnmA/TRMU family.

Its subcellular location is the cytoplasm. It carries out the reaction S-sulfanyl-L-cysteinyl-[protein] + uridine(34) in tRNA + AH2 + ATP = 2-thiouridine(34) in tRNA + L-cysteinyl-[protein] + A + AMP + diphosphate + H(+). Catalyzes the 2-thiolation of uridine at the wobble position (U34) of tRNA, leading to the formation of s(2)U34. In Clostridium beijerinckii (strain ATCC 51743 / NCIMB 8052) (Clostridium acetobutylicum), this protein is tRNA-specific 2-thiouridylase MnmA.